We begin with the raw amino-acid sequence, 551 residues long: Eukaryotic translation initiation factor 3 subunit D-2 (551 aa).

Residues 108–152 are disordered; the sequence is RARGRTGRGNATLGGLGGPVAGGSTANSTKYGKGRNTRNAQNMGR. The segment covering 119-128 has biased composition (gly residues); sequence TLGGLGGPVA. Residues 290–304 form an RNA gate region; that stretch reads QFDLLTVNETSLEPP. The disordered stretch occupies residues 530-551; the sequence is AFDSDGDDESESSEPFGNSIDN. Residues 531-541 show a composition bias toward acidic residues; it reads FDSDGDDESES.

Belongs to the eIF-3 subunit D family. As to quaternary structure, component of the eukaryotic translation initiation factor 3 (eIF-3) complex. The eIF-3 complex interacts with pix.

Its subcellular location is the cytoplasm. In terms of biological role, mRNA cap-binding component of the eukaryotic translation initiation factor 3 (eIF-3) complex, which is involved in protein synthesis of a specialized repertoire of mRNAs and, together with other initiation factors, stimulates binding of mRNA and methionyl-tRNAi to the 40S ribosome. The eIF-3 complex specifically targets and initiates translation of a subset of mRNAs involved in cell proliferation. In the eIF-3 complex, eif3d specifically recognizes and binds the 7-methylguanosine cap of a subset of mRNAs. The chain is Eukaryotic translation initiation factor 3 subunit D-2 from Drosophila yakuba (Fruit fly).